The chain runs to 421 residues: Polygalacturonase (421 aa).

The first 20 residues, 1–20, serve as a signal peptide directing secretion; the sequence is MKFSTAIIVSFLFIADFCAA. Asn-156 and Asn-180 each carry an N-linked (GlcNAc...) asparagine glycan. PbH1 repeat units follow at residues 178 to 204 and 205 to 226; these read CKNITFDGFTITAPGDSPNTDGIHMGK and STDVKILNTNIGTGDDCVSIGD. Asp-219 (proton donor) is an active-site residue. His-242 is a catalytic residue. PbH1 repeat units follow at residues 258–279 and 289–310; these read VEGITVKNCTLTATDNGVRIKT and VSDIHFEDITMTNVKNPVIIDQ. N-linked (GlcNAc...) asparagine glycosylation occurs at Asn-265. Residues 394–421 form a disordered region; it reads PGAPAASTTATPAASKTATPAAGKSPAK.

It belongs to the glycosyl hydrolase 28 family. In terms of tissue distribution, pollen specific.

The protein resides in the secreted. It localises to the cell wall. It catalyses the reaction (1,4-alpha-D-galacturonosyl)n+m + H2O = (1,4-alpha-D-galacturonosyl)n + (1,4-alpha-D-galacturonosyl)m.. Its function is as follows. May function in the depolymerization of the pectin in its walls during pollen tube elongation, or in that of the pistil during pollination. The protein is Polygalacturonase of Medicago sativa (Alfalfa).